Consider the following 448-residue polypeptide: tRNA methyltransferase 10 homolog C (448 aa).

The transit peptide at 1–48 directs the protein to the mitochondrion; the sequence is MAFVNTLLRTIRCSAVHTLVQEGRSLSLLKASHQLTQSRKIMLSNHVR. Residues 137 to 165 adopt a coiled-coil conformation; the sequence is REVMKTNRKEKKKELKESKSKIESLDQLE. The segment at 144-167 is disordered; sequence RKEKKKELKESKSKIESLDQLETK. In terms of domain architecture, SAM-dependent MTase TRM10-type spans 190-382; the sequence is QRWKCVQAMK…SFVPNRKHDG (193 aa). The interval 429-448 is disordered; sequence ERTDDTSIRSTRKRWWEEEN.

It belongs to the class IV-like SAM-binding methyltransferase superfamily. TRM10 family. As to quaternary structure, component of mitochondrial ribonuclease P. Interacts with HSD17B10/MRPP2.

The protein localises to the mitochondrion matrix. It localises to the mitochondrion nucleoid. It catalyses the reaction adenosine(9) in tRNA + S-adenosyl-L-methionine = N(1)-methyladenosine(9) in tRNA + S-adenosyl-L-homocysteine + H(+). The catalysed reaction is guanosine(9) in tRNA + S-adenosyl-L-methionine = N(1)-methylguanosine(9) in tRNA + S-adenosyl-L-homocysteine + H(+). It carries out the reaction an adenosine in mRNA + S-adenosyl-L-methionine = an N(1)-methyladenosine in mRNA + S-adenosyl-L-homocysteine + H(+). In terms of biological role, mitochondrial tRNA N(1)-methyltransferase involved in mitochondrial tRNA maturation. Component of mitochondrial ribonuclease P, which cleaves tRNA molecules in their 5'-ends. Together with hsd17b10/mrpp2, forms a subcomplex of the mitochondrial ribonuclease P, named MRPP1-MRPP2 subcomplex, which displays functions that are independent of the ribonuclease P activity. The MRPP1-MRPP2 subcomplex catalyzes the formation of N(1)-methylguanine and N(1)-methyladenine at position 9 (m1G9 and m1A9, respectively) in tRNAs; trmt10c/mrpp1 acting as the catalytic N(1)-methyltransferase subunit. The MRPP1-MRPP2 subcomplex also acts as a tRNA maturation platform: following 5'-end cleavage by the mitochondrial ribonuclease P complex, the MRPP1-MRPP2 subcomplex enhances the efficiency of 3'-processing catalyzed by ELAC2, retains the tRNA product after elac2 processing and presents the nascent tRNA to the mitochondrial CCA tRNA nucleotidyltransferase TRNT1 enzyme. In addition to tRNA N(1)-methyltransferase activity, trmt10c/mrpp1 also acts as a mRNA N(1)-methyltransferase by mediating methylation of adenosine residues at the N(1) position of MT-ND5 mRNA. This Xenopus tropicalis (Western clawed frog) protein is tRNA methyltransferase 10 homolog C.